Here is a 181-residue protein sequence, read N- to C-terminus: ATP-dependent protease subunit HslV (181 aa).

T5 is an active-site residue. Na(+) contacts are provided by A161, C164, and T167.

This sequence belongs to the peptidase T1B family. HslV subfamily. In terms of assembly, a double ring-shaped homohexamer of HslV is capped on each side by a ring-shaped HslU homohexamer. The assembly of the HslU/HslV complex is dependent on binding of ATP.

It localises to the cytoplasm. It catalyses the reaction ATP-dependent cleavage of peptide bonds with broad specificity.. Its activity is regulated as follows. Allosterically activated by HslU binding. Functionally, protease subunit of a proteasome-like degradation complex believed to be a general protein degrading machinery. This chain is ATP-dependent protease subunit HslV, found in Sulfurimonas denitrificans (strain ATCC 33889 / DSM 1251) (Thiomicrospira denitrificans (strain ATCC 33889 / DSM 1251)).